The primary structure comprises 105 residues: Putative membrane protein insertion efficiency factor (105 aa).

Belongs to the UPF0161 family.

The protein localises to the cell membrane. Could be involved in insertion of integral membrane proteins into the membrane. In Bifidobacterium longum (strain NCC 2705), this protein is Putative membrane protein insertion efficiency factor.